The sequence spans 929 residues: Isoleucine--tRNA ligase (929 aa).

The 'HIGH' region motif lies at 58–68 (PYANGDIHIGH). Residue Glu-563 participates in L-isoleucyl-5'-AMP binding. Positions 605 to 609 (KMSKS) match the 'KMSKS' region motif. Lys-608 contributes to the ATP binding site. Residues Cys-892, Cys-895, Cys-912, and Cys-915 each coordinate Zn(2+).

This sequence belongs to the class-I aminoacyl-tRNA synthetase family. IleS type 1 subfamily. As to quaternary structure, monomer. Requires Zn(2+) as cofactor.

The protein localises to the cytoplasm. It catalyses the reaction tRNA(Ile) + L-isoleucine + ATP = L-isoleucyl-tRNA(Ile) + AMP + diphosphate. Functionally, catalyzes the attachment of isoleucine to tRNA(Ile). As IleRS can inadvertently accommodate and process structurally similar amino acids such as valine, to avoid such errors it has two additional distinct tRNA(Ile)-dependent editing activities. One activity is designated as 'pretransfer' editing and involves the hydrolysis of activated Val-AMP. The other activity is designated 'posttransfer' editing and involves deacylation of mischarged Val-tRNA(Ile). In Neisseria meningitidis serogroup C (strain 053442), this protein is Isoleucine--tRNA ligase.